Here is an 89-residue protein sequence, read N- to C-terminus: MNDYHYVYIVECSDESLYTGYTTDVERRVREHNAGEGAKYTRGRTPVQLVHFECFDTRSAALSREHEIKSYTREKKQQLAEEGTDINQP.

The GIY-YIG domain maps to aspartate 3–glutamine 78.

This sequence belongs to the UPF0213 family.

This chain is UPF0213 protein HQ_3675A, found in Haloquadratum walsbyi (strain DSM 16790 / HBSQ001).